The following is a 314-amino-acid chain: MKNKSMEIEFILLGLTDDPQLQIVIFLFLFLNYTLSLMGNLIIIILTLLDPRLKTPMYFFLRNFSFLEVIFTTVCIPRFLITIVTRDKTISYNNCATQLFFILLPGVTEFYLLAAMSYDRYVAICKPLHYPIIMSSKVCYQLVLSSWVTGFLIIFPPLVMGLKLDFCASKTIDHFMCETSPILQISCTDTHVLELMSFTLAVVTLVVTLVLVILSYTCIIKTILKFSSAQQRNKAFSTCTSHMIVVSMTYGSCIFMYIKPSAKERVTVSKGVALLYTSIAPLLNPFIYTLRNQQVKEVFWDVLQKNLCFSKRPF.

Residues 1 to 24 (MKNKSMEIEFILLGLTDDPQLQIV) lie on the Extracellular side of the membrane. Residue N3 is glycosylated (N-linked (GlcNAc...) asparagine). A helical transmembrane segment spans residues 25-45 (IFLFLFLNYTLSLMGNLIIII). Topologically, residues 46–63 (LTLLDPRLKTPMYFFLRN) are cytoplasmic. Residues 64–84 (FSFLEVIFTTVCIPRFLITIV) traverse the membrane as a helical segment. The Extracellular portion of the chain corresponds to 85–95 (TRDKTISYNNC). C95 and C177 are joined by a disulfide. The chain crosses the membrane as a helical span at residues 96-116 (ATQLFFILLPGVTEFYLLAAM). Residues 117 to 141 (SYDRYVAICKPLHYPIIMSSKVCYQ) are Cytoplasmic-facing. A helical transmembrane segment spans residues 142-162 (LVLSSWVTGFLIIFPPLVMGL). At 163–199 (KLDFCASKTIDHFMCETSPILQISCTDTHVLELMSFT) the chain is on the extracellular side. The helical transmembrane segment at 200-220 (LAVVTLVVTLVLVILSYTCII) threads the bilayer. Topologically, residues 221-237 (KTILKFSSAQQRNKAFS) are cytoplasmic. Residues 238 to 258 (TCTSHMIVVSMTYGSCIFMYI) traverse the membrane as a helical segment. Topologically, residues 259–269 (KPSAKERVTVS) are extracellular. The chain crosses the membrane as a helical span at residues 270–290 (KGVALLYTSIAPLLNPFIYTL). The Cytoplasmic portion of the chain corresponds to 291-314 (RNQQVKEVFWDVLQKNLCFSKRPF).

Belongs to the G-protein coupled receptor 1 family.

It is found in the cell membrane. Functionally, odorant receptor. This is Olfactory receptor 6C6 (OR6C6) from Homo sapiens (Human).